The following is a 201-amino-acid chain: Small ribosomal subunit protein uS4c (201 aa).

The tract at residues 15–43 (LGALPGLTSKRPSPGSDLRNQSRSGKRSQ) is disordered. The S4 RNA-binding domain occupies 89–150 (MRLDNILFRL…EQRSRALIQK (62 aa)).

It belongs to the universal ribosomal protein uS4 family. Part of the 30S ribosomal subunit. Contacts protein S5. The interaction surface between S4 and S5 is involved in control of translational fidelity.

The protein resides in the plastid. It is found in the chloroplast. Its function is as follows. One of the primary rRNA binding proteins, it binds directly to 16S rRNA where it nucleates assembly of the body of the 30S subunit. In terms of biological role, with S5 and S12 plays an important role in translational accuracy. The chain is Small ribosomal subunit protein uS4c (rps4) from Ceratophyllum demersum (Rigid hornwort).